The chain runs to 555 residues: Hydroxylamine reductase (555 aa).

C5, C8, C17, and C23 together coordinate [4Fe-4S] cluster. Residues H248, E272, C316, C408, C436, C461, E496, and K498 each contribute to the hybrid [4Fe-2O-2S] cluster site. Cysteine persulfide is present on C408.

Belongs to the HCP family. It depends on [4Fe-4S] cluster as a cofactor. Requires hybrid [4Fe-2O-2S] cluster as cofactor.

It localises to the cytoplasm. The enzyme catalyses A + NH4(+) + H2O = hydroxylamine + AH2 + H(+). In terms of biological role, catalyzes the reduction of hydroxylamine to form NH(3) and H(2)O. In Halothermothrix orenii (strain H 168 / OCM 544 / DSM 9562), this protein is Hydroxylamine reductase.